A 361-amino-acid polypeptide reads, in one-letter code: uncharacterized protein (361 aa).

Residues 1–10 (MRRYLKKAKP) are compositionally biased toward basic residues. 2 disordered regions span residues 1–82 (MRRY…SSFH) and 94–147 (ALSH…VNTS). 2 stretches are compositionally biased toward basic and acidic residues: residues 44–57 (KEKN…KYEN) and 120–134 (FTKK…ESEL). Residues 135–147 (QTRSSPPLPVNTS) are compositionally biased toward polar residues. Positions 295 to 349 (NILTMDEQIQRLKEAIASEKLQQEERSQIIKSLMEEELEINEQEEKIKHSFIDLD) form a coiled coil.

The protein localises to the cytoplasm. It localises to the nucleus. This is an uncharacterized protein from Schizosaccharomyces pombe (strain 972 / ATCC 24843) (Fission yeast).